The sequence spans 548 residues: Chaperonin GroEL (548 aa).

Residues 30-33 (TLGP), Lys-51, 87-91 (DGTTT), Gly-415, 479-481 (NAA), and Asp-495 each bind ATP.

It belongs to the chaperonin (HSP60) family. Forms a cylinder of 14 subunits composed of two heptameric rings stacked back-to-back. Interacts with the co-chaperonin GroES. Post-translationally, UMPylated on a tyrosine residue by YdiU under ATP-limited conditions.

The protein localises to the cytoplasm. The catalysed reaction is ATP + H2O + a folded polypeptide = ADP + phosphate + an unfolded polypeptide.. UMPylation of the chaperone by YdiU negatively regulates its activity, facilitating Salmonella survival under ATP-limited conditions. Together with its co-chaperonin GroES, plays an essential role in assisting protein folding. The GroEL-GroES system forms a nano-cage that allows encapsulation of the non-native substrate proteins and provides a physical environment optimized to promote and accelerate protein folding. The chain is Chaperonin GroEL from Salmonella typhimurium (strain LT2 / SGSC1412 / ATCC 700720).